The primary structure comprises 102 residues: Methane monooxygenase component D (102 aa).

In terms of assembly, the soluble methane monooxygenase (sMMO) consists of four components A/MMOH (composed of alpha/MmoX, beta/MmoY and gamma/MmoZ), B/MMOB (MmoB), C/MMOR (MmoC) and D/MMOD (MmoD).

This Methylosinus trichosporium protein is Methane monooxygenase component D (mmoD).